Here is a 215-residue protein sequence, read N- to C-terminus: Protein GET1 (215 aa).

Residues 1 to 4 (MINL) are Lumenal-facing. Residues 5–24 (ALVIFLCTLLNQIVSWVGKS) form a helical membrane-spanning segment. Topologically, residues 25-108 (VLQEIAFTAY…SFSKKFSTLL (84 aa)) are cytoplasmic. A coiled-coil region spans residues 73-94 (AKLRRKLDKGLADLEKTNNTLS). The chain crosses the membrane as a helical span at residues 109 to 129 (WLMTTGAQFLLSWWFRKQPIF). Topologically, residues 130–153 (WLPEGWVPYPVAWLLSFPSAPIGS) are lumenal. A helical transmembrane segment spans residues 154 to 170 (VSSGAWGAICRRVLSTL). The Cytoplasmic segment spans residues 171–215 (QEIIQSVLAPSPAATGPVPTGPSSAKNDQPEAKIEALALEHEKLD). Positions 181–202 (SPAATGPVPTGPSSAKNDQPEA) are disordered.

The protein belongs to the WRB/GET1 family. Interacts with GET3.

It localises to the endoplasmic reticulum membrane. In terms of biological role, required for the post-translational delivery of tail-anchored (TA) proteins to the endoplasmic reticulum. Acts as a membrane receptor for soluble GET3, which recognizes and selectively binds the transmembrane domain of TA proteins in the cytosol. This is Protein GET1 from Cryptococcus neoformans var. neoformans serotype D (strain B-3501A) (Filobasidiella neoformans).